A 519-amino-acid polypeptide reads, in one-letter code: Protein tweety homolog 1 (519 aa).

The Extracellular segment spans residues 1–42 (MTFASFLINFYSVIPRLNFKFHWTNDVFNLEWSSEYFQALAL). A helical membrane pass occupies residues 43-63 (VACLGAAVSLLLLVTIIIVWI). At 64-82 (CQACHKNETTGKTRRRVRR) the chain is on the cytoplasmic side. The chain crosses the membrane as a helical span at residues 83 to 103 (LSTVLFIISVLCFFMLGVCLF). Over 104–217 (ANEHVNRGMS…VLSLYESERW (114 aa)) the chain is Extracellular. 3 N-linked (GlcNAc...) asparagine glycosylation sites follow: N142, N163, and N176. A helical transmembrane segment spans residues 218–238 (AFLVILLSITMVVLFTGVVAF). Residues 239–245 (CKQSKKG) lie on the Cytoplasmic side of the membrane. Residues 246-266 (AVVFSAIGFFIFVVVWLLISI) traverse the membrane as a helical segment. Residues 267-395 (SLPLTIALAD…GTCNQSVAGM (129 aa)) are Extracellular-facing. N-linked (GlcNAc...) asparagine glycosylation is found at N328, N341, N348, and N389. The helical transmembrane segment at 396–416 (SIYMLSILLLGVFLFILLIVV) threads the bilayer. Residues 417–519 (SKTWNLFSRL…YNNYEDRYNM (103 aa)) are Cytoplasmic-facing. A disordered region spans residues 459 to 485 (YNPRTRDRTEPSTNTTSGTADEPNAPL).

It belongs to the tweety family.

It localises to the cell membrane. Its function is as follows. Probable chloride channel. The sequence is that of Protein tweety homolog 1 (ttyh-1) from Caenorhabditis elegans.